The following is a 124-amino-acid chain: U33-theraphotoxin-Cg1a (124 aa).

Residues 1-17 form the signal peptide; that stretch reads MKFAVAIAFTLLVCVFA. Cystine bridges form between cysteine 26–cysteine 37, cysteine 31–cysteine 51, cysteine 36–cysteine 75, cysteine 61–cysteine 83, and cysteine 77–cysteine 94. Residues 93-108 are compositionally biased toward basic and acidic residues; it reads RCQEESGKSDKSKESQ. Positions 93–124 are disordered; that stretch reads RCQEESGKSDKSKESQGSDESEESEESKESCG. Residues 109–118 are compositionally biased toward acidic residues; it reads GSDESEESEE.

Belongs to the neurotoxin 32 family. As to expression, expressed by the venom gland.

It is found in the secreted. This is U33-theraphotoxin-Cg1a from Chilobrachys guangxiensis (Chinese earth tiger tarantula).